A 161-amino-acid polypeptide reads, in one-letter code: Ribosomal RNA large subunit methyltransferase H (161 aa).

S-adenosyl-L-methionine is bound by residues Leu78, Gly110, and 129–134 (LGRMTF).

The protein belongs to the RNA methyltransferase RlmH family. Homodimer.

It is found in the cytoplasm. It catalyses the reaction pseudouridine(1915) in 23S rRNA + S-adenosyl-L-methionine = N(3)-methylpseudouridine(1915) in 23S rRNA + S-adenosyl-L-homocysteine + H(+). Functionally, specifically methylates the pseudouridine at position 1915 (m3Psi1915) in 23S rRNA. The protein is Ribosomal RNA large subunit methyltransferase H of Symbiobacterium thermophilum (strain DSM 24528 / JCM 14929 / IAM 14863 / T).